The following is a 264-amino-acid chain: S-adenosylmethionine decarboxylase proenzyme (264 aa).

Ser113 (schiff-base intermediate with substrate; via pyruvic acid) is an active-site residue. Ser113 is subject to Pyruvic acid (Ser); by autocatalysis. The active-site Proton acceptor; for processing activity is the His118. The active-site Proton donor; for catalytic activity is Cys141.

The protein belongs to the prokaryotic AdoMetDC family. Type 2 subfamily. As to quaternary structure, heterooctamer of four alpha and four beta chains arranged as a tetramer of alpha/beta heterodimers. It depends on pyruvate as a cofactor. Is synthesized initially as an inactive proenzyme. Formation of the active enzyme involves a self-maturation process in which the active site pyruvoyl group is generated from an internal serine residue via an autocatalytic post-translational modification. Two non-identical subunits are generated from the proenzyme in this reaction, and the pyruvate is formed at the N-terminus of the alpha chain, which is derived from the carboxyl end of the proenzyme. The post-translation cleavage follows an unusual pathway, termed non-hydrolytic serinolysis, in which the side chain hydroxyl group of the serine supplies its oxygen atom to form the C-terminus of the beta chain, while the remainder of the serine residue undergoes an oxidative deamination to produce ammonia and the pyruvoyl group blocking the N-terminus of the alpha chain.

The catalysed reaction is S-adenosyl-L-methionine + H(+) = S-adenosyl 3-(methylsulfanyl)propylamine + CO2. The protein operates within amine and polyamine biosynthesis; S-adenosylmethioninamine biosynthesis; S-adenosylmethioninamine from S-adenosyl-L-methionine: step 1/1. Catalyzes the decarboxylation of S-adenosylmethionine to S-adenosylmethioninamine (dcAdoMet), the propylamine donor required for the synthesis of the polyamines spermine and spermidine from the diamine putrescine. The chain is S-adenosylmethionine decarboxylase proenzyme from Xanthomonas campestris pv. campestris (strain B100).